The following is a 1050-amino-acid chain: FHIP family protein GE18198 (1050 aa).

Ser-498 and Ser-805 each carry phosphoserine. 4 disordered regions span residues 800 to 827 (KGNE…GQLR), 865 to 888 (TSMF…SASS), 911 to 954 (TDGR…SGSN), and 968 to 995 (SNTT…SEPA). Over residues 808–826 (HHSQQQQMATNSGQQQGQL) the composition is skewed to polar residues. The span at 872–888 (SASNTSTTPPNGSSASS) shows a compositional bias: low complexity. Positions 918-935 (HAQTSAGTCETSLSTQPQ) are enriched in polar residues. The segment covering 941 to 954 (TGAIATSATASGSN) has biased composition (low complexity). Over residues 968 to 977 (SNTTTHSAST) the composition is skewed to polar residues.

This sequence belongs to the FHIP family.

In Drosophila yakuba (Fruit fly), this protein is FHIP family protein GE18198.